The primary structure comprises 251 residues: NLP effector protein Pc129485 (251 aa).

A signal peptide spans Met-1–Ala-19. A Hepta-peptide GHRHDWE motif motif is present at residues Gly-127–Glu-133. Residues Asn-146 and Asn-218 are each glycosylated (N-linked (GlcNAc...) asparagine).

This sequence belongs to the Necrosis inducing protein (NPP1) family.

Its subcellular location is the secreted. Secreted effector that contributes strongly to virulence during infection by P.capsici. This is NLP effector protein Pc129485 from Phytophthora capsici.